The following is a 174-amino-acid chain: Actin-related protein 2/3 complex subunit 3 (174 aa).

This sequence belongs to the ARPC3 family. As to quaternary structure, component of the Arp2/3 complex composed of arpB/Arp2, arpC/Arp3, arcA/p41-arc, arcB/p34-arc, arcC/p21-arc, arcD/p20-arc and arcE/p16-arc. Interacts with carmil (via the region between the LRR domain and COOH-terminal proline-rich domain); carmil is required for Arp2/3-dependent actin nucleation. Arp2/3 complex, MyoB, MyoC, and the alpha and beta subunits of capping protein all form a larger complex with carmil.

It localises to the cytoplasm. It is found in the cytoskeleton. Its subcellular location is the cytosol. The protein resides in the cell cortex. The protein localises to the cell projection. It localises to the pseudopodium. Functions as a component of the Arp2/3 complex which is involved in regulation of actin polymerization and together with an activating nucleation-promoting factor (NPF) mediates the formation of branched actin networks. Seems to contact the pointed end of the daughter actin filament. The Arp2/3 complex is involved in organizing the actin system in cell motility and chemotaxis, in phagocytosis and macropinocytosis, at late steps of endosome processing, and in mitosis. In concert with a group of other proteins, the Arp2/3 complex plays a general role in the rapid activation and adaptation of the actin system to its multiple functions. This chain is Actin-related protein 2/3 complex subunit 3 (arcC), found in Dictyostelium discoideum (Social amoeba).